Consider the following 957-residue polypeptide: Glycine dehydrogenase (decarboxylating) (957 aa).

At K708 the chain carries N6-(pyridoxal phosphate)lysine.

Belongs to the GcvP family. As to quaternary structure, the glycine cleavage system is composed of four proteins: P, T, L and H. Pyridoxal 5'-phosphate is required as a cofactor.

The catalysed reaction is N(6)-[(R)-lipoyl]-L-lysyl-[glycine-cleavage complex H protein] + glycine + H(+) = N(6)-[(R)-S(8)-aminomethyldihydrolipoyl]-L-lysyl-[glycine-cleavage complex H protein] + CO2. Functionally, the glycine cleavage system catalyzes the degradation of glycine. The P protein binds the alpha-amino group of glycine through its pyridoxal phosphate cofactor; CO(2) is released and the remaining methylamine moiety is then transferred to the lipoamide cofactor of the H protein. The protein is Glycine dehydrogenase (decarboxylating) of Escherichia coli O8 (strain IAI1).